We begin with the raw amino-acid sequence, 358 residues long: Photosystem II protein D1 2 (358 aa).

The next 3 helical transmembrane spans lie at 28–45, 117–132, and 141–155; these read YVGW…AATI, HFLI…QWEL, and WICV…AAMV. Chlorophyll a is bound at residue His117. Pheophytin a is bound at residue Tyr125. [CaMn4O5] cluster-binding residues include Asp169 and Glu188. A helical membrane pass occupies residues 196–217; the sequence is FHMLGVAGVFGGSLFSAMHGSL. Chlorophyll a is bound at residue His197. Residues His214 and 263–264 each bind a quinone; that span reads SF. His214 lines the Fe cation pocket. His271 is a Fe cation binding site. A helical membrane pass occupies residues 273–287; sequence FLAAWPVVGIWFTSM. Residues His331, Glu332, Asp341, and Ala343 each coordinate [CaMn4O5] cluster. Positions 344–358 are excised as a propeptide; the sequence is TTESAPVALQAPAVG.

Belongs to the reaction center PufL/M/PsbA/D family. In terms of assembly, PSII is composed of 1 copy each of membrane proteins PsbA, PsbB, PsbC, PsbD, PsbE, PsbF, PsbH, PsbI, PsbJ, PsbK, PsbL, PsbM, PsbT, PsbX, PsbY, PsbZ, Psb30/Ycf12, peripheral proteins PsbO, CyanoQ (PsbQ), PsbU, PsbV and a large number of cofactors. It forms dimeric complexes. The cofactor is The D1/D2 heterodimer binds P680, chlorophylls that are the primary electron donor of PSII, and subsequent electron acceptors. It shares a non-heme iron and each subunit binds pheophytin, quinone, additional chlorophylls, carotenoids and lipids. D1 provides most of the ligands for the Mn4-Ca-O5 cluster of the oxygen-evolving complex (OEC). There is also a Cl(-1) ion associated with D1 and D2, which is required for oxygen evolution. The PSII complex binds additional chlorophylls, carotenoids and specific lipids.. Tyr-160 forms a radical intermediate that is referred to as redox-active TyrZ, YZ or Y-Z. In terms of processing, C-terminally processed by CtpA; processing is essential to allow assembly of the oxygen-evolving complex and thus photosynthetic growth.

The protein localises to the cellular thylakoid membrane. The enzyme catalyses 2 a plastoquinone + 4 hnu + 2 H2O = 2 a plastoquinol + O2. In terms of biological role, photosystem II (PSII) is a light-driven water:plastoquinone oxidoreductase that uses light energy to abstract electrons from H(2)O, generating O(2) and a proton gradient subsequently used for ATP formation. It consists of a core antenna complex that captures photons, and an electron transfer chain that converts photonic excitation into a charge separation. The D1/D2 (PsbA/PsbD) reaction center heterodimer binds P680, the primary electron donor of PSII as well as several subsequent electron acceptors. The sequence is that of Photosystem II protein D1 2 from Synechococcus sp. (strain RCC307).